Consider the following 408-residue polypeptide: Neutral cholesterol ester hydrolase 1 (408 aa).

Over 1–4 (MRSS) the chain is Cytoplasmic. The chain crosses the membrane as a helical; Signal-anchor for type II membrane protein span at residues 5 to 25 (CVLLAALLALAAYYVYIPLPS). Over 26-408 (AVSDPWKLML…SYIKWLDQNL (383 aa)) the chain is Lumenal. The Involved in the stabilization of the negatively charged intermediate by the formation of the oxyanion hole signature appears at 113–115 (HGG). Ser-191 is a catalytic residue. An N-linked (GlcNAc...) asparagine glycan is attached at Asn-270. Asp-348 is an active-site residue. N-linked (GlcNAc...) asparagine glycosylation occurs at Asn-367. His-378 is a catalytic residue. A glycan (N-linked (GlcNAc...) asparagine) is linked at Asn-389.

Belongs to the 'GDXG' lipolytic enzyme family. In terms of processing, N-glycosylated. Present in brain, heart, kidney, lung, spinal cord and testis but not liver (at protein level). Expressed in peritoneal macrophages and kidney.

The protein resides in the cell membrane. It localises to the microsome. The catalysed reaction is a 1-O-alkyl-2-acetyl-sn-glycerol + H2O = a 1-O-alkyl-sn-glycerol + acetate + H(+). It catalyses the reaction 1-O-hexadecyl-2-acetyl-sn-glycerol + H2O = 1-O-hexadecyl-sn-glycerol + acetate + H(+). It carries out the reaction a cholesterol ester + H2O = cholesterol + a fatty acid + H(+). The enzyme catalyses cholesteryl (9Z-octadecenoate) + H2O = cholesterol + (9Z)-octadecenoate + H(+). Its activity is regulated as follows. Inhibited by bulky trifluoromethyl ketones. Its function is as follows. Hydrolyzes 2-acetyl monoalkylglycerol ether (1-O-alkyl-2-acetyl-sn-glycerol), the penultimate precursor of the pathway for de novo synthesis of platelet-activating factor. May be responsible for the hydrolysis of cholesterol esters (such as cholesteryl (9Z-octadecenoate)) in macrophages. Also involved in organ detoxification by hydrolyzing exogenous organophosphorus compounds. The sequence is that of Neutral cholesterol ester hydrolase 1 (Nceh1) from Mus musculus (Mouse).